The sequence spans 312 residues: Glycerol-3-phosphate dehydrogenase [NAD(P)+] (312 aa).

Trp-11, Arg-30, Arg-31, and Lys-95 together coordinate NADPH. Positions 95, 123, and 125 each coordinate sn-glycerol 3-phosphate. Residue Ala-127 coordinates NADPH. Residues Lys-177, Asp-230, Ser-240, Arg-241, and Asn-242 each contribute to the sn-glycerol 3-phosphate site. The active-site Proton acceptor is Lys-177. Position 241 (Arg-241) interacts with NADPH. Residues Val-265 and Glu-267 each contribute to the NADPH site.

It belongs to the NAD-dependent glycerol-3-phosphate dehydrogenase family.

The protein resides in the cytoplasm. It carries out the reaction sn-glycerol 3-phosphate + NAD(+) = dihydroxyacetone phosphate + NADH + H(+). The catalysed reaction is sn-glycerol 3-phosphate + NADP(+) = dihydroxyacetone phosphate + NADPH + H(+). Its pathway is membrane lipid metabolism; glycerophospholipid metabolism. Catalyzes the reduction of the glycolytic intermediate dihydroxyacetone phosphate (DHAP) to sn-glycerol 3-phosphate (G3P), the key precursor for phospholipid synthesis. The sequence is that of Glycerol-3-phosphate dehydrogenase [NAD(P)+] from Helicobacter pylori (strain Shi470).